The chain runs to 617 residues: Threonine--tRNA ligase (617 aa).

The segment at 209–502 (DHRRLGKDLD…MTENYAGDFP (294 aa)) is catalytic. Residues Cys302, His353, and His479 each contribute to the Zn(2+) site.

This sequence belongs to the class-II aminoacyl-tRNA synthetase family. As to quaternary structure, homodimer. Requires Zn(2+) as cofactor.

Its subcellular location is the cytoplasm. The catalysed reaction is tRNA(Thr) + L-threonine + ATP = L-threonyl-tRNA(Thr) + AMP + diphosphate + H(+). Its function is as follows. Catalyzes the attachment of threonine to tRNA(Thr) in a two-step reaction: L-threonine is first activated by ATP to form Thr-AMP and then transferred to the acceptor end of tRNA(Thr). Also edits incorrectly charged L-seryl-tRNA(Thr). This chain is Threonine--tRNA ligase, found in Synechococcus sp. (strain CC9311).